Consider the following 221-residue polypeptide: Urease accessory protein UreG (221 aa).

Gly19–Thr26 is a GTP binding site.

This sequence belongs to the SIMIBI class G3E GTPase family. UreG subfamily. As to quaternary structure, homodimer. UreD, UreF and UreG form a complex that acts as a GTP-hydrolysis-dependent molecular chaperone, activating the urease apoprotein by helping to assemble the nickel containing metallocenter of UreC. The UreE protein probably delivers the nickel.

It is found in the cytoplasm. In terms of biological role, facilitates the functional incorporation of the urease nickel metallocenter. This process requires GTP hydrolysis, probably effectuated by UreG. Its function is as follows. Expression of the urease operon increases the likelihood of bacterial survival by contributing to acid resistance in vitro and in vivo in BALB/c mice. Y.enterocolitica enters the body via an oral path and must survive the acidic stomach before being able to colonize the intestinal mucosa. This Yersinia enterocolitica protein is Urease accessory protein UreG.